Consider the following 74-residue polypeptide: Protein YkgV (74 aa).

The chain is Protein YkgV from Escherichia coli (strain K12).